Here is a 222-residue protein sequence, read N- to C-terminus: UPF0128 protein TK2294 (222 aa).

This sequence belongs to the UPF0128 family.

The sequence is that of UPF0128 protein TK2294 from Thermococcus kodakarensis (strain ATCC BAA-918 / JCM 12380 / KOD1) (Pyrococcus kodakaraensis (strain KOD1)).